The primary structure comprises 208 residues: Protein-L-isoaspartate O-methyltransferase (208 aa).

Ser59 is a catalytic residue.

This sequence belongs to the methyltransferase superfamily. L-isoaspartyl/D-aspartyl protein methyltransferase family.

The protein localises to the cytoplasm. It catalyses the reaction [protein]-L-isoaspartate + S-adenosyl-L-methionine = [protein]-L-isoaspartate alpha-methyl ester + S-adenosyl-L-homocysteine. Functionally, catalyzes the methyl esterification of L-isoaspartyl residues in peptides and proteins that result from spontaneous decomposition of normal L-aspartyl and L-asparaginyl residues. It plays a role in the repair and/or degradation of damaged proteins. The polypeptide is Protein-L-isoaspartate O-methyltransferase (Aliivibrio fischeri (strain MJ11) (Vibrio fischeri)).